A 398-amino-acid chain; its full sequence is tRNA-specific 2-thiouridylase MnmA (398 aa).

Residues 18-25 (AMSGGVDS) and Leu44 contribute to the ATP site. Cys112 functions as the Nucleophile in the catalytic mechanism. A disulfide bond links Cys112 and Cys213. Gly136 is a binding site for ATP. Residues 163-165 (RDQ) are interaction with tRNA. Cys213 (cysteine persulfide intermediate) is an active-site residue.

This sequence belongs to the MnmA/TRMU family.

Its subcellular location is the cytoplasm. It catalyses the reaction S-sulfanyl-L-cysteinyl-[protein] + uridine(34) in tRNA + AH2 + ATP = 2-thiouridine(34) in tRNA + L-cysteinyl-[protein] + A + AMP + diphosphate + H(+). Catalyzes the 2-thiolation of uridine at the wobble position (U34) of tRNA, leading to the formation of s(2)U34. The chain is tRNA-specific 2-thiouridylase MnmA from Sinorhizobium fredii (strain NBRC 101917 / NGR234).